The following is a 123-amino-acid chain: Small ribosomal subunit protein uS12 (123 aa).

Asp-89 bears the 3-methylthioaspartic acid mark. Positions 101 to 123 (TLDTSGVSDRRQSRSKYGAKRPK) are disordered. Basic residues predominate over residues 113-123 (SRSKYGAKRPK).

Belongs to the universal ribosomal protein uS12 family. Part of the 30S ribosomal subunit. Contacts proteins S8 and S17. May interact with IF1 in the 30S initiation complex.

In terms of biological role, with S4 and S5 plays an important role in translational accuracy. Its function is as follows. Interacts with and stabilizes bases of the 16S rRNA that are involved in tRNA selection in the A site and with the mRNA backbone. Located at the interface of the 30S and 50S subunits, it traverses the body of the 30S subunit contacting proteins on the other side and probably holding the rRNA structure together. The combined cluster of proteins S8, S12 and S17 appears to hold together the shoulder and platform of the 30S subunit. The sequence is that of Small ribosomal subunit protein uS12 from Solidesulfovibrio magneticus (strain ATCC 700980 / DSM 13731 / RS-1) (Desulfovibrio magneticus).